Consider the following 582-residue polypeptide: GPI-anchor transamidase component PIGT (582 aa).

An N-terminal signal peptide occupies residues Met-1–Gly-25. Residues Cys-26–Pro-529 lie on the Lumenal side of the membrane. N-linked (GlcNAc...) asparagine glycosylation is present at Asn-168. 2 disulfides stabilise this stretch: Cys-199/Cys-276 and Cys-230/Cys-235. 2 N-linked (GlcNAc...) asparagine glycosylation sites follow: Asn-295 and Asn-331. Asn-465, Asp-525, Ser-527, and Asn-531 together coordinate a 2-acyl-6-[6-phosphoethanolamine-alpha-D-mannosyl-(1-&gt;2)-6-phosphoethanolamine-alpha-D-mannosyl-(1-&gt;6)-2-phosphoethanolamine-alpha-D-mannosyl-(1-&gt;4)-alpha-D-glucosaminyl]-1-(1-radyl,2-acyl-sn-glycero-3-phospho)-1D-myo-inositol. The helical transmembrane segment at Tyr-530–Thr-552 threads the bilayer. Residues Arg-553 to Leu-582 lie on the Cytoplasmic side of the membrane.

Belongs to the PIGT family. Heteropentamer. Part of the GPI-anchor transamidase complex, consisting of PIGK, PIGT, PIGS, PIGU and GAA1. In terms of processing, the disulfide bond between PIGK/GPI8 and PIGT is important for normal enzyme activity.

It localises to the endoplasmic reticulum membrane. Its pathway is glycolipid biosynthesis; glycosylphosphatidylinositol-anchor biosynthesis. In terms of biological role, component of the glycosylphosphatidylinositol-anchor (GPI-anchor) transamidase (GPI-T) complex that catalyzes the formation of the linkage between a proprotein and a GPI-anchor and participates in GPI anchored protein biosynthesis. May play a crucial role in GPI-T complex assembly in the luminal layer. Binds GPI-anchor. In Mus musculus (Mouse), this protein is GPI-anchor transamidase component PIGT.